Reading from the N-terminus, the 510-residue chain is NAD(P)H-quinone oxidoreductase subunit 2 A, chloroplastic (510 aa).

The next 13 helical transmembrane spans lie at 24–44 (LLLF…GLIL), 57–77 (IPWL…ALLF), 99–119 (IFQF…VEYI), 124–144 (MAIT…MFLC), 149–169 (LITI…LSGY), 183–203 (YLLM…WLYG), 229–249 (ISIA…PAPF), 295–315 (WHLL…LIAI), 323–343 (MLAY…IVGD), 354–374 (YMLF…LFGL), 395–415 (ALSS…AGFF), 418–438 (LYLF…IGLL), and 484–504 (MILC…IIAI).

The protein belongs to the complex I subunit 2 family. As to quaternary structure, NDH is composed of at least 16 different subunits, 5 of which are encoded in the nucleus.

The protein resides in the plastid. It localises to the chloroplast thylakoid membrane. The enzyme catalyses a plastoquinone + NADH + (n+1) H(+)(in) = a plastoquinol + NAD(+) + n H(+)(out). It carries out the reaction a plastoquinone + NADPH + (n+1) H(+)(in) = a plastoquinol + NADP(+) + n H(+)(out). In terms of biological role, NDH shuttles electrons from NAD(P)H:plastoquinone, via FMN and iron-sulfur (Fe-S) centers, to quinones in the photosynthetic chain and possibly in a chloroplast respiratory chain. The immediate electron acceptor for the enzyme in this species is believed to be plastoquinone. Couples the redox reaction to proton translocation, and thus conserves the redox energy in a proton gradient. This chain is NAD(P)H-quinone oxidoreductase subunit 2 A, chloroplastic, found in Piper cenocladum (Ant piper).